Consider the following 486-residue polypeptide: Glutamyl-tRNA(Gln) amidotransferase subunit A (486 aa).

Active-site charge relay system residues include K76 and S151. The active-site Acyl-ester intermediate is S175.

Belongs to the amidase family. GatA subfamily. As to quaternary structure, heterotrimer of A, B and C subunits.

It catalyses the reaction L-glutamyl-tRNA(Gln) + L-glutamine + ATP + H2O = L-glutaminyl-tRNA(Gln) + L-glutamate + ADP + phosphate + H(+). Functionally, allows the formation of correctly charged Gln-tRNA(Gln) through the transamidation of misacylated Glu-tRNA(Gln) in organisms which lack glutaminyl-tRNA synthetase. The reaction takes place in the presence of glutamine and ATP through an activated gamma-phospho-Glu-tRNA(Gln). This chain is Glutamyl-tRNA(Gln) amidotransferase subunit A, found in Chromohalobacter salexigens (strain ATCC BAA-138 / DSM 3043 / CIP 106854 / NCIMB 13768 / 1H11).